The following is a 506-amino-acid chain: Trans-cinnamate 4-monooxygenase (506 aa).

A helical membrane pass occupies residues 3–23; sequence DFVLLEKALLGLFIATIVAIT. (E)-cinnamate is bound by residues 214–219 and Ala-307; that span reads RSRLAQ. Residue Cys-448 participates in heme binding.

Belongs to the cytochrome P450 family. It depends on heme as a cofactor.

It localises to the membrane. The enzyme catalyses (E)-cinnamate + reduced [NADPH--hemoprotein reductase] + O2 = (E)-4-coumarate + oxidized [NADPH--hemoprotein reductase] + H2O + H(+). It participates in phenylpropanoid metabolism; trans-4-coumarate biosynthesis; trans-4-coumarate from trans-cinnamate: step 1/1. Functionally, catalyzes the first oxidative step of the phenylpropanoid pathway in higher plants by transforming trans-cinnamate into p-coumarate. The compounds formed by this pathway are essential components for lignification, pollination, and defense against ultraviolet light, predators and pathogens. The chain is Trans-cinnamate 4-monooxygenase (CYP73A10) from Petroselinum crispum (Parsley).